The sequence spans 943 residues: Isoleucine--tRNA ligase (943 aa).

The 'HIGH' region signature appears at Pro-59 to His-69. Residue Glu-577 participates in L-isoleucyl-5'-AMP binding. The 'KMSKS' region signature appears at Lys-618–Ser-622. Lys-621 lines the ATP pocket. Zn(2+) contacts are provided by Cys-906, Cys-909, Cys-926, and Cys-929.

Belongs to the class-I aminoacyl-tRNA synthetase family. IleS type 1 subfamily. Monomer. It depends on Zn(2+) as a cofactor.

The protein localises to the cytoplasm. It carries out the reaction tRNA(Ile) + L-isoleucine + ATP = L-isoleucyl-tRNA(Ile) + AMP + diphosphate. In terms of biological role, catalyzes the attachment of isoleucine to tRNA(Ile). As IleRS can inadvertently accommodate and process structurally similar amino acids such as valine, to avoid such errors it has two additional distinct tRNA(Ile)-dependent editing activities. One activity is designated as 'pretransfer' editing and involves the hydrolysis of activated Val-AMP. The other activity is designated 'posttransfer' editing and involves deacylation of mischarged Val-tRNA(Ile). In Xanthomonas campestris pv. campestris (strain 8004), this protein is Isoleucine--tRNA ligase.